We begin with the raw amino-acid sequence, 258 residues long: MLILISPAKTLDYQSPLTTTRYTLPELLDNSQQLIHEARKLTPPQISTLMRISDKLAGINAARFHDWQPDFTPENARQAILAFKGDVYTGLQAETFSEDDFDFTQQHLRMLSGLYGVLRPLDLMQPYRLEMGIRLENARGKDLYQFWGDIITNKLNEALAAQGDNVVINLASDEYFKSVKPKKLNAEIIKPVFLDEKNGKFKIISFYAKKARGLMSRFIIENRLTKPEQLTGFNSEGYFFDEASSSNGELVFKRYEQR.

The protein belongs to the UPF0246 family.

The polypeptide is UPF0246 protein YaaA (Shigella dysenteriae serotype 1 (strain Sd197)).